The following is a 355-amino-acid chain: 3-isopropylmalate dehydrogenase (355 aa).

The substrate site is built by R90, R100, R128, and D222. D222, D246, and D250 together coordinate Mg(2+). Position 280–292 (G280–N292) interacts with NAD(+).

This sequence belongs to the isocitrate and isopropylmalate dehydrogenases family. LeuB type 1 subfamily. In terms of assembly, homodimer. Requires Mg(2+) as cofactor. The cofactor is Mn(2+).

It localises to the cytoplasm. It catalyses the reaction (2R,3S)-3-isopropylmalate + NAD(+) = 4-methyl-2-oxopentanoate + CO2 + NADH. It functions in the pathway amino-acid biosynthesis; L-leucine biosynthesis; L-leucine from 3-methyl-2-oxobutanoate: step 3/4. Its function is as follows. Catalyzes the oxidation of 3-carboxy-2-hydroxy-4-methylpentanoate (3-isopropylmalate) to 3-carboxy-4-methyl-2-oxopentanoate. The product decarboxylates to 4-methyl-2 oxopentanoate. The sequence is that of 3-isopropylmalate dehydrogenase from Burkholderia lata (strain ATCC 17760 / DSM 23089 / LMG 22485 / NCIMB 9086 / R18194 / 383).